A 180-amino-acid polypeptide reads, in one-letter code: Segregation and condensation protein B (180 aa).

This sequence belongs to the ScpB family. As to quaternary structure, homodimer. Homodimerization may be required to stabilize the binding of ScpA to the Smc head domains. Component of a cohesin-like complex composed of ScpA, ScpB and the Smc homodimer, in which ScpA and ScpB bind to the head domain of Smc. The presence of the three proteins is required for the association of the complex with DNA.

Its subcellular location is the cytoplasm. Its function is as follows. Participates in chromosomal partition during cell division. May act via the formation of a condensin-like complex containing Smc and ScpA that pull DNA away from mid-cell into both cell halves. The chain is Segregation and condensation protein B from Staphylococcus aureus (strain USA300).